The chain runs to 311 residues: Bifunctional pinoresinol-lariciresinol reductase (311 aa).

Residues 10 to 16 (GGTGYLG), Arg-35, and Lys-44 each bind NADP(+). The active-site Proton acceptor is Lys-138. NADP(+) is bound at residue Arg-142. Position 270 (His-270) interacts with substrate.

This sequence belongs to the NmrA-type oxidoreductase family. Isoflavone reductase subfamily. In terms of assembly, dimer. Expressed in rhizomes, stems, and leaves.

It catalyses the reaction (-)-secoisolariciresinol + NADP(+) = (+)-lariciresinol + NADPH + H(+). The catalysed reaction is (+)-lariciresinol + NADP(+) = (+)-pinoresinol + NADPH + H(+). It functions in the pathway aromatic compound metabolism; phenylpropanoid biosynthesis. In terms of biological role, reductase involved in lignan biosynthesis. Also involved in the biosynthesis of etoposide, a chemotherapeutic compound of the topoisomerase inhibitor family. Catalyzes the enantioselective sequential conversion of (+)-pinoresinol into (+)-lariciresinol and of (+)-lariciresinol into (-)-secoisolariciresinol. Abstracts the 4R-hydride from the NADPH cofactor during catalysis. In Sinopodophyllum hexandrum (Himalayan may apple), this protein is Bifunctional pinoresinol-lariciresinol reductase.